Consider the following 61-residue polypeptide: Small ribosomal subunit protein uS14 (61 aa).

Zn(2+)-binding residues include Cys-24, Cys-27, Cys-40, and Cys-43.

The protein belongs to the universal ribosomal protein uS14 family. Zinc-binding uS14 subfamily. In terms of assembly, part of the 30S ribosomal subunit. Contacts proteins S3 and S10. Zn(2+) is required as a cofactor.

Its function is as follows. Binds 16S rRNA, required for the assembly of 30S particles and may also be responsible for determining the conformation of the 16S rRNA at the A site. This chain is Small ribosomal subunit protein uS14, found in Desulforamulus reducens (strain ATCC BAA-1160 / DSM 100696 / MI-1) (Desulfotomaculum reducens).